The primary structure comprises 65 residues: uncharacterized protein (65 aa).

The helical transmembrane segment at 37 to 57 (ILAIMTSVLPVLLIYIIWIFI) threads the bilayer.

It is found in the cell membrane. This is an uncharacterized protein from Bacillus subtilis (strain 168).